A 460-amino-acid polypeptide reads, in one-letter code: Ammonium transporter 1 member 3 (460 aa).

The next 10 membrane-spanning stretches (helical) occupy residues Ala15–Ala37, Leu50–Phe72, Phe98–Ile117, Thr124–Trp146, Ile166–Val188, Asn209–Phe227, Ala255–Val277, Pro305–Leu327, Ala337–Ala356, and Gly377–Val399.

Belongs to the ammonia transporter channel (TC 1.A.11.2) family. As to expression, leaves.

The protein resides in the membrane. Ammonium transporter that may be involved in ammonium transport throughout the plant. The polypeptide is Ammonium transporter 1 member 3 (AMT1-3) (Solanum lycopersicum (Tomato)).